The following is a 2472-amino-acid chain: Spectrin alpha chain, non-erythrocytic 1 (2472 aa).

The residue at position 1 (Met-1) is an N-acetylmethionine. Spectrin repeat units lie at residues 45–146, 150–251, 256–358, 361–465, 468–570, 574–676, 679–781, 785–888, and 891–969; these read RFQF…IKLL, KLVQ…QGKL, EVQR…ARLN, YRLQ…QYEQ, DLQL…AQLA, HLQQ…KLRE, QQQQ…QKLA, RLQQ…DLED, and QAQQ…ETGK. A Phosphoserine modification is found at Ser-587. Lys-637 is modified (N6-acetyllysine). Lys-803 carries the post-translational modification N6-acetyllysine. Phosphoserine is present on residues Ser-924, Ser-982, Ser-999, Ser-1029, Ser-1031, and Ser-1041. Positions 967–1026 constitute an SH3 domain; the sequence is TGKELVLALYDYQEKSPREVTMKKGDILTLLNSTNKDWWKVEVNDRQGFVPAAYVKKLDP. The stretch at 1096–1166 is one Spectrin 10 repeat; that stretch reads LFREANELQQ…LESEGLMAEE (71 aa). At Tyr-1176 the chain carries Phosphotyrosine. Residues Ser-1190, Ser-1207, Ser-1217, Ser-1291, Ser-1306, Ser-1323, and Ser-1338 each carry the phosphoserine modification. One copy of the Spectrin 11 repeat lies at 1233-1336; the sequence is HEVQRFHRDA…RADQRKAKLG (104 aa). 2 Spectrin repeats span residues 1339 to 1442 and 1446 to 1549; these read HDLQ…MMLD and ELQL…KLGE. N6-acetyllysine is present on Lys-1519. Phosphoserine is present on residues Ser-1550, Ser-1557, Ser-1578, Ser-1615, and Ser-1647. Spectrin repeat units lie at residues 1552–1656, 1659–1762, 1764–1868, 1871–1974, 1978–2081, 2092–2194, and 2206–2310; these read TLQQ…KLKE, KQQN…KLNE, HRLH…RLEE, EYQQ…KLDE, FLQF…KLLE, LFLT…LELQ, and LRQE…NLEQ. Phosphothreonine is present on Thr-2020. Lys-2052 carries the N6-acetyllysine modification. 3 EF-hand domains span residues 2323-2358, 2366-2401, and 2404-2439; these read EALK…LGYD, EPDP…RETE, and KSSE…EQAD. Ca(2+) contacts are provided by Asp-2336, Asp-2338, Ser-2340, Arg-2342, Glu-2347, Asp-2379, Asn-2381, Asp-2383, His-2385, and Glu-2390. Lys-2421 is modified (N6-acetyllysine).

Belongs to the spectrin family. In terms of assembly, like erythrocyte spectrin, the spectrin-like proteins are capable of forming dimers which can further associate to tetramers. Interacts (via C-terminal spectrin repeats) with TRPC4. Interacts with CALM and EMD. Interacts with isoform 1 of ACP1. Identified in a complex with ACTN4, CASK, IQGAP1, MAGI2, NPHS1 and SPTBN1. Interacts with SHANK3 (via ANK repeats). Interacts with CLN3; this interaction regulates the fodrin localization at the plasma membrane. Phosphorylation of Tyr-1176 decreases sensitivity to cleavage by calpain in vitro.

The protein resides in the cytoplasm. It is found in the cytoskeleton. The protein localises to the cell cortex. Fodrin, which seems to be involved in secretion, interacts with calmodulin in a calcium-dependent manner and is thus candidate for the calcium-dependent movement of the cytoskeleton at the membrane. The chain is Spectrin alpha chain, non-erythrocytic 1 (SPTAN1) from Homo sapiens (Human).